A 542-amino-acid chain; its full sequence is Major facilitator superfamily domain-containing protein 6-like (542 aa).

A run of 11 helical transmembrane segments spans residues 46–66, 89–109, 198–218, 246–266, 272–292, 321–341, 352–372, 381–401, 404–424, 444–464, and 469–489; these read LGLS…LALL, LLSS…GILV, MFFL…PLEW, VGAA…FCRI, FYSY…LPIY, VTVI…LWLM, GICL…AGPL, WMLV…SFLW, WAVM…WWSV, FEAF…GFVV, and VNVL…ALAV.

This sequence belongs to the major facilitator superfamily. MFSD6 family.

The protein localises to the membrane. The polypeptide is Major facilitator superfamily domain-containing protein 6-like (mfsd6l) (Danio rerio (Zebrafish)).